We begin with the raw amino-acid sequence, 149 residues long: Pleckstrin homology domain-containing family J member 1 (149 aa).

A PH domain is found at 15-108 (RAEKAAELSM…WVEALTNASY (94 aa)).

The chain is Pleckstrin homology domain-containing family J member 1 (plekhj1) from Xenopus tropicalis (Western clawed frog).